Here is a 507-residue protein sequence, read N- to C-terminus: uncharacterized protein (507 aa).

Helical transmembrane passes span 11–31 (ILCFFLWQFGLFYACQLIFPI), 97–117 (AWIATIQFIGALVGALVYGHL), 125–145 (PVSFVGISIGIIFGVASGFAP), 149–169 (VFAVLLFICGTSVACIMIVFY), 187–207 (FFNWGYARLVFTLVCFICGYW), 209–229 (SAAIATSLLALPILPVLLWLP), 283–303 (LFSSWPIAYSTIVVGSLWFST), 326–346 (FVQAAAIALSKLSIFLLDLFI), 354–374 (LHQVPQIIMIACYTTIMALMI), 388–408 (LAIIIINIIGTSFIELTWDAC), 423–443 (IGIGTCSLLARIGALLAPQMA), and 452–472 (IPYIIVCSIGIISLLISCFFL).

The protein belongs to the major facilitator superfamily.

The protein localises to the membrane. This is an uncharacterized protein from Caenorhabditis elegans.